A 398-amino-acid chain; its full sequence is GTP cyclohydrolase-2 (398 aa).

Positions 1-172 (MNTPTHTHPH…TAAACASTTE (172 aa)) are unknown. The tract at residues 173–398 (YELVTRTPVP…VKPIAKTGHA (226 aa)) is GTP cyclohydrolase II. Position 220–224 (220–224 (RVHSS)) interacts with GTP. Zn(2+)-binding residues include Cys-225, Cys-236, and Cys-238. GTP is bound by residues Gln-241, 263–265 (EGR), and Thr-285. Catalysis depends on Asp-297, which acts as the Proton acceptor. Residue Arg-299 is the Nucleophile of the active site. GTP is bound by residues Ser-320 and Lys-325. The interval 375–398 (QRPQDPSETVDGETVKPIAKTGHA) is disordered.

The protein in the C-terminal section; belongs to the GTP cyclohydrolase II family. The cofactor is Zn(2+).

The catalysed reaction is GTP + 4 H2O = 2,5-diamino-6-hydroxy-4-(5-phosphoribosylamino)-pyrimidine + formate + 2 phosphate + 3 H(+). It participates in cofactor biosynthesis; riboflavin biosynthesis; 5-amino-6-(D-ribitylamino)uracil from GTP: step 1/4. Functionally, catalyzes the conversion of GTP to 2,5-diamino-6-ribosylamino-4(3H)-pyrimidinone 5'-phosphate (DARP), formate and pyrophosphate. This chain is GTP cyclohydrolase-2 (ribA), found in Xylella fastidiosa (strain Temecula1 / ATCC 700964).